We begin with the raw amino-acid sequence, 203 residues long: uncharacterized protein (203 aa).

Residues 89–109 (CEIPFAACSVLSWSLPTIAAL) form a helical membrane-spanning segment.

It localises to the membrane. This is an uncharacterized protein from Saccharomyces cerevisiae (strain ATCC 204508 / S288c) (Baker's yeast).